The chain runs to 240 residues: UDP-2,3-diacylglucosamine hydrolase (240 aa).

Residues Asp7, His9, Asp40, Asn78, and His113 each coordinate Mn(2+). 78–79 (NR) contributes to the substrate binding site. Residues Asp121, Ser159, Lys166, and His194 each coordinate substrate. His194 and His196 together coordinate Mn(2+).

The protein belongs to the LpxH family. It depends on Mn(2+) as a cofactor.

The protein resides in the cell inner membrane. It catalyses the reaction UDP-2-N,3-O-bis[(3R)-3-hydroxytetradecanoyl]-alpha-D-glucosamine + H2O = 2-N,3-O-bis[(3R)-3-hydroxytetradecanoyl]-alpha-D-glucosaminyl 1-phosphate + UMP + 2 H(+). The protein operates within glycolipid biosynthesis; lipid IV(A) biosynthesis; lipid IV(A) from (3R)-3-hydroxytetradecanoyl-[acyl-carrier-protein] and UDP-N-acetyl-alpha-D-glucosamine: step 4/6. Its function is as follows. Hydrolyzes the pyrophosphate bond of UDP-2,3-diacylglucosamine to yield 2,3-diacylglucosamine 1-phosphate (lipid X) and UMP by catalyzing the attack of water at the alpha-P atom. Involved in the biosynthesis of lipid A, a phosphorylated glycolipid that anchors the lipopolysaccharide to the outer membrane of the cell. This is UDP-2,3-diacylglucosamine hydrolase from Pseudomonas putida (strain ATCC 47054 / DSM 6125 / CFBP 8728 / NCIMB 11950 / KT2440).